The following is a 525-amino-acid chain: GMP synthase [glutamine-hydrolyzing] (525 aa).

Residues 8-206 (PLLILDFGSQ…VVDICKASTD (199 aa)) form the Glutamine amidotransferase type-1 domain. Catalysis depends on Cys-85, which acts as the Nucleophile. Active-site residues include His-180 and Glu-182. One can recognise a GMPS ATP-PPase domain in the interval 207–400 (WTPEHIIDEA…LGLPHDMVYR (194 aa)). 234–240 (SGGVDSS) contacts ATP.

As to quaternary structure, homodimer.

It carries out the reaction XMP + L-glutamine + ATP + H2O = GMP + L-glutamate + AMP + diphosphate + 2 H(+). It participates in purine metabolism; GMP biosynthesis; GMP from XMP (L-Gln route): step 1/1. Functionally, catalyzes the synthesis of GMP from XMP. This is GMP synthase [glutamine-hydrolyzing] from Legionella pneumophila subsp. pneumophila (strain Philadelphia 1 / ATCC 33152 / DSM 7513).